Here is a 380-residue protein sequence, read N- to C-terminus: Dual-specificity RNA methyltransferase RlmN (380 aa).

Glu94 serves as the catalytic Proton acceptor. Residues 100 to 339 (DGDRATLCVS…VTVRKTRGDD (240 aa)) enclose the Radical SAM core domain. Cys107 and Cys344 are oxidised to a cystine. [4Fe-4S] cluster-binding residues include Cys114, Cys118, and Cys121. S-adenosyl-L-methionine-binding positions include 168–169 (GE), Ser200, 222–224 (SLH), and Asn301. Catalysis depends on Cys344, which acts as the S-methylcysteine intermediate.

It belongs to the radical SAM superfamily. RlmN family. The cofactor is [4Fe-4S] cluster.

It is found in the cytoplasm. It carries out the reaction adenosine(2503) in 23S rRNA + 2 reduced [2Fe-2S]-[ferredoxin] + 2 S-adenosyl-L-methionine = 2-methyladenosine(2503) in 23S rRNA + 5'-deoxyadenosine + L-methionine + 2 oxidized [2Fe-2S]-[ferredoxin] + S-adenosyl-L-homocysteine. The catalysed reaction is adenosine(37) in tRNA + 2 reduced [2Fe-2S]-[ferredoxin] + 2 S-adenosyl-L-methionine = 2-methyladenosine(37) in tRNA + 5'-deoxyadenosine + L-methionine + 2 oxidized [2Fe-2S]-[ferredoxin] + S-adenosyl-L-homocysteine. Specifically methylates position 2 of adenine 2503 in 23S rRNA and position 2 of adenine 37 in tRNAs. m2A2503 modification seems to play a crucial role in the proofreading step occurring at the peptidyl transferase center and thus would serve to optimize ribosomal fidelity. The chain is Dual-specificity RNA methyltransferase RlmN from Vibrio atlanticus (strain LGP32) (Vibrio splendidus (strain Mel32)).